The chain runs to 778 residues: Gelsolin (778 aa).

Positions 1-23 (MGKQGFGYIFLTIFCTMALKLNC) are cleaved as a signal peptide. The tract at residues 49-172 (MVEHAEFSKA…YKAGGVASGF (124 aa)) is actin-severing. One copy of the Gelsolin-like 1 repeat lies at 72-154 (FDLVPVPKNL…VQGHESSTFL (83 aa)). Ca(2+) is bound by residues Gly88, Asp89, Glu120, Asp132, Gly137, and Ala139. The segment at 119–122 (DERG) is actin-actin interfilament contact point. A 1,2-diacyl-sn-glycero-3-phospho-(1D-myo-inositol-4,5-bisphosphate) is bound at residue 158–165 (KSGIKYKA). Residue Val168 participates in Ca(2+) binding. 184–192 (RLLQVKGRR) provides a ligand contact to a 1,2-diacyl-sn-glycero-3-phospho-(1D-myo-inositol-4,5-bisphosphate). A Gelsolin-like 2 repeat occupies 193 to 266 (TVRATEVPVS…SEEGAEREEM (74 aa)). Residues Gly209 and Asp210 each contribute to the Ca(2+) site. A disulfide bond links Cys211 and Cys224. Positions 232, 282, 325, 326, 350, 467, 468, 498, 510, 515, 517, 547, 587, 588, 610, 692, 693, and 715 each coordinate Ca(2+). Gelsolin-like repeat units lie at residues 313–385 (DENP…TPLF) and 451–532 (SEKV…PHLM). Positions 430-778 (AAQHGMEDDG…LQRAMADVDV (349 aa)) are actin-binding, Ca-sensitive. 2 Gelsolin-like repeats span residues 574-638 (AVEL…DNFW) and 677-752 (IEEV…PPTF).

The protein belongs to the villin/gelsolin family. Binds to actin and to fibronectin. In terms of tissue distribution, highly expressed in homogene cells of the basilar papilla. Also detected in subcutaneous layer of the skin.

It localises to the secreted. Its subcellular location is the cytoplasm. The protein resides in the cytoskeleton. Its function is as follows. Calcium-regulated, actin-modulating protein that binds to the plus (or barbed) ends of actin monomers or filaments, preventing monomer exchange (end-blocking or capping). It can promote the assembly of monomers into filaments (nucleation) as well as sever filaments already formed. Plays a role in ciliogenesis. This is Gelsolin (GSN) from Gallus gallus (Chicken).